Consider the following 248-residue polypeptide: Ras-like protein family member 11B (248 aa).

A small GTPase-like region spans residues 30 to 248; it reads ASSRVIKIAV…SSKVRTATSV (219 aa). GTP is bound by residues 41 to 48, 88 to 99, and 153 to 156; these read GGSGVGKT, DTPGVQINEQNL, and NKAD. Residues 206 to 228 are disordered; it reads QNTGTSERRKNSIIPRPKSPNMQ.

This sequence belongs to the small GTPase superfamily. Ras family.

The catalysed reaction is GTP + H2O = GDP + phosphate + H(+). In Xenopus laevis (African clawed frog), this protein is Ras-like protein family member 11B.